Consider the following 640-residue polypeptide: Chaperone protein HtpG (640 aa).

Positions 1 to 348 (MAQYKFETEV…SEDLPLNVSR (348 aa)) are a; substrate-binding. The b stretch occupies residues 349 to 565 (EILQQNRILS…ETDPSLQMER (217 aa)). Residues 566 to 640 (MMRAMGQFNT…RLNRLMTNLK (75 aa)) form a c region.

Belongs to the heat shock protein 90 family. In terms of assembly, homodimer.

It localises to the cytoplasm. Molecular chaperone. Has ATPase activity. This is Chaperone protein HtpG from Treponema denticola (strain ATCC 35405 / DSM 14222 / CIP 103919 / JCM 8153 / KCTC 15104).